A 1160-amino-acid polypeptide reads, in one-letter code: Nck-associated protein 1 homolog (1160 aa).

The protein belongs to the HEM-1/HEM-2 family. In terms of assembly, part of a Scar/WAVE complex containing brk1, scrA, abiA, pirA and napA.

Involved in regulation of actin and microtubule organization. Involved in cell adhesion. The chain is Nck-associated protein 1 homolog (napA) from Dictyostelium discoideum (Social amoeba).